A 281-amino-acid polypeptide reads, in one-letter code: 3-hydroxyanthranilate 3,4-dioxygenase (281 aa).

Positions 1–162 (MSGVTAIEIP…SNEFKTGKPG (162 aa)) are domain A (catalytic). Arg45 contributes to the O2 binding site. Residues His49, Glu55, and His93 each contribute to the Fe cation site. Position 55 (Glu55) interacts with substrate. Substrate-binding residues include Arg97 and Glu107. The linker stretch occupies residues 163–179 (KGTFACNAPYEARWTDL). The segment at 180-281 (PVPINRKEFI…GFAITIRMPA (102 aa)) is domain B.

This sequence belongs to the 3-HAO family. Fe(2+) serves as cofactor.

The protein resides in the cytoplasm. It catalyses the reaction 3-hydroxyanthranilate + O2 = (2Z,4Z)-2-amino-3-carboxymuconate 6-semialdehyde. The protein operates within cofactor biosynthesis; NAD(+) biosynthesis; quinolinate from L-kynurenine: step 3/3. Catalyzes the oxidative ring opening of 3-hydroxyanthranilate to 2-amino-3-carboxymuconate semialdehyde, which spontaneously cyclizes to quinolinate. This is 3-hydroxyanthranilate 3,4-dioxygenase (haao-1) from Caenorhabditis elegans.